Consider the following 176-residue polypeptide: Disulfide bond formation protein B (176 aa).

Topologically, residues Met-1 to Ala-14 are cytoplasmic. Residues Trp-15–Trp-31 traverse the membrane as a helical segment. Residues Phe-32–Cys-49 are Periplasmic-facing. Cysteines 41 and 44 form a disulfide. A helical transmembrane segment spans residues Ala-50–Pro-65. At Lys-66–Tyr-71 the chain is on the cytoplasmic side. Residues Val-72–Tyr-89 form a helical membrane-spanning segment. Residues Glu-90–Gln-144 are Periplasmic-facing. Cysteines 104 and 130 form a disulfide. A helical transmembrane segment spans residues Trp-145–Ala-163. Topologically, residues Gln-164–Arg-176 are cytoplasmic.

This sequence belongs to the DsbB family.

The protein localises to the cell inner membrane. In terms of biological role, required for disulfide bond formation in some periplasmic proteins. Acts by oxidizing the DsbA protein. The protein is Disulfide bond formation protein B of Salmonella paratyphi A (strain ATCC 9150 / SARB42).